Here is a 76-residue protein sequence, read N- to C-terminus: Large ribosomal subunit protein eL20 (76 aa).

The protein belongs to the eukaryotic ribosomal protein eL20 family. In terms of assembly, part of the 50S ribosomal subunit. Binds 23S rRNA.

In Methanococcus maripaludis (strain C5 / ATCC BAA-1333), this protein is Large ribosomal subunit protein eL20.